We begin with the raw amino-acid sequence, 235 residues long: Matrix protein (235 aa).

Belongs to the nucleorhabdovirus type-2 matrix protein family. Homomultimer. Interacts with nucleoprotein and with the cytoplasmic domain of glycoprotein.

Its subcellular location is the virion membrane. The protein resides in the host endomembrane system. In terms of biological role, plays a major role in assembly and budding of virion. Completely covers the ribonucleoprotein coil and keep it in condensed bullet-shaped form. Inhibits viral transcription and stimulates replication. The polypeptide is Matrix protein (M) (Rottboellia (Sorghum)).